The following is a 239-amino-acid chain: 7-cyano-7-deazaguanine synthase (239 aa).

Position 13 to 23 (13 to 23 (FSGGQDSTTCL)) interacts with ATP. Residues Cys192, Cys201, Cys204, and Cys207 each coordinate Zn(2+).

Belongs to the QueC family. Zn(2+) is required as a cofactor.

It catalyses the reaction 7-carboxy-7-deazaguanine + NH4(+) + ATP = 7-cyano-7-deazaguanine + ADP + phosphate + H2O + H(+). It functions in the pathway purine metabolism; 7-cyano-7-deazaguanine biosynthesis. In terms of biological role, catalyzes the ATP-dependent conversion of 7-carboxy-7-deazaguanine (CDG) to 7-cyano-7-deazaguanine (preQ(0)). This Shewanella sp. (strain MR-7) protein is 7-cyano-7-deazaguanine synthase.